The primary structure comprises 828 residues: Protein SEY1 homolog (828 aa).

The Cytoplasmic segment spans residues 1–718 (MTEDVMNDDF…SSKNGISWKN (718 aa)). Residues 44 to 284 (GFNYNVLSIL…VPSDGFFYYA (241 aa)) enclose the GB1/RHD3-type G domain. 54–61 (GCQSSGKS) is a binding site for GTP. The helical transmembrane segment at 719 to 739 (IPPPFWILLLLCSWNELCSVL) threads the bilayer. At 740 to 742 (RIV) the chain is on the lumenal side. A helical membrane pass occupies residues 743-763 (FKVQVLIPLIILGFIVVQYFS). The Cytoplasmic segment spans residues 764-828 (HLVFGTSADA…NDSGKKAEEN (65 aa)).

Belongs to the TRAFAC class dynamin-like GTPase superfamily. GB1/RHD3 GTPase family. RHD3 subfamily.

It is found in the endoplasmic reticulum membrane. Probable GTP-binding protein that may be involved in cell development. The polypeptide is Protein SEY1 homolog (Babesia bovis).